The primary structure comprises 461 residues: UDP-N-acetylmuramoylalanine--D-glutamate ligase (461 aa).

Residue 123 to 129 participates in ATP binding; sequence GTNGKTT.

The protein belongs to the MurCDEF family.

It is found in the cytoplasm. The enzyme catalyses UDP-N-acetyl-alpha-D-muramoyl-L-alanine + D-glutamate + ATP = UDP-N-acetyl-alpha-D-muramoyl-L-alanyl-D-glutamate + ADP + phosphate + H(+). It participates in cell wall biogenesis; peptidoglycan biosynthesis. Functionally, cell wall formation. Catalyzes the addition of glutamate to the nucleotide precursor UDP-N-acetylmuramoyl-L-alanine (UMA). The protein is UDP-N-acetylmuramoylalanine--D-glutamate ligase of Natranaerobius thermophilus (strain ATCC BAA-1301 / DSM 18059 / JW/NM-WN-LF).